A 430-amino-acid polypeptide reads, in one-letter code: 3-phosphoshikimate 1-carboxyvinyltransferase (430 aa).

3-phosphoshikimate contacts are provided by Lys20, Ser21, and Arg25. Phosphoenolpyruvate is bound at residue Lys20. Phosphoenolpyruvate-binding residues include Gly92 and Arg120. 4 residues coordinate 3-phosphoshikimate: Ser166, Gln168, Asp312, and Lys339. Residue Gln168 participates in phosphoenolpyruvate binding. The active-site Proton acceptor is Asp312. 2 residues coordinate phosphoenolpyruvate: Arg343 and Arg387.

It belongs to the EPSP synthase family. As to quaternary structure, monomer.

Its subcellular location is the cytoplasm. The enzyme catalyses 3-phosphoshikimate + phosphoenolpyruvate = 5-O-(1-carboxyvinyl)-3-phosphoshikimate + phosphate. It functions in the pathway metabolic intermediate biosynthesis; chorismate biosynthesis; chorismate from D-erythrose 4-phosphate and phosphoenolpyruvate: step 6/7. Its function is as follows. Catalyzes the transfer of the enolpyruvyl moiety of phosphoenolpyruvate (PEP) to the 5-hydroxyl of shikimate-3-phosphate (S3P) to produce enolpyruvyl shikimate-3-phosphate and inorganic phosphate. The protein is 3-phosphoshikimate 1-carboxyvinyltransferase of Lactococcus lactis subsp. lactis (strain IL1403) (Streptococcus lactis).